The following is a 200-amino-acid chain: Superoxide dismutase [Fe] (200 aa).

Fe cation contacts are provided by H28, H82, D165, and H169.

This sequence belongs to the iron/manganese superoxide dismutase family. As to quaternary structure, homodimer. It depends on Fe cation as a cofactor.

The catalysed reaction is 2 superoxide + 2 H(+) = H2O2 + O2. In terms of biological role, destroys superoxide anion radicals which are normally produced within the cells and which are toxic to biological systems. The polypeptide is Superoxide dismutase [Fe] (sodB) (Rhodobacter capsulatus (Rhodopseudomonas capsulata)).